The primary structure comprises 226 residues: Cytochrome c oxidase subunit 2 (226 aa).

Residues 1 to 25 (MNTWLLSLQNSNSPTYDMMIFFHDF) are Mitochondrial intermembrane-facing. Residues 26 to 47 (TMMILIFITLLILFIMFTMINN) traverse the membrane as a helical segment. At 48-61 (NLINRFLLQGHFIE) the chain is on the mitochondrial matrix side. Residues 62–81 (LIWTITPMIILILIAIPSFK) traverse the membrane as a helical segment. At 82 to 226 (ILYLTDEMFN…YFKNWLKSFL (145 aa)) the chain is on the mitochondrial intermembrane side. Cu cation is bound by residues H160, C195, E197, C199, H203, and M206. E197 provides a ligand contact to Mg(2+).

This sequence belongs to the cytochrome c oxidase subunit 2 family. As to quaternary structure, component of the cytochrome c oxidase (complex IV, CIV), a multisubunit enzyme composed of a catalytic core of 3 subunits and several supernumerary subunits. The complex exists as a monomer or a dimer and forms supercomplexes (SCs) in the inner mitochondrial membrane with ubiquinol-cytochrome c oxidoreductase (cytochrome b-c1 complex, complex III, CIII). The cofactor is Cu cation.

It is found in the mitochondrion inner membrane. It catalyses the reaction 4 Fe(II)-[cytochrome c] + O2 + 8 H(+)(in) = 4 Fe(III)-[cytochrome c] + 2 H2O + 4 H(+)(out). Functionally, component of the cytochrome c oxidase, the last enzyme in the mitochondrial electron transport chain which drives oxidative phosphorylation. The respiratory chain contains 3 multisubunit complexes succinate dehydrogenase (complex II, CII), ubiquinol-cytochrome c oxidoreductase (cytochrome b-c1 complex, complex III, CIII) and cytochrome c oxidase (complex IV, CIV), that cooperate to transfer electrons derived from NADH and succinate to molecular oxygen, creating an electrochemical gradient over the inner membrane that drives transmembrane transport and the ATP synthase. Cytochrome c oxidase is the component of the respiratory chain that catalyzes the reduction of oxygen to water. Electrons originating from reduced cytochrome c in the intermembrane space (IMS) are transferred via the dinuclear copper A center (CU(A)) of subunit 2 and heme A of subunit 1 to the active site in subunit 1, a binuclear center (BNC) formed by heme A3 and copper B (CU(B)). The BNC reduces molecular oxygen to 2 water molecules using 4 electrons from cytochrome c in the IMS and 4 protons from the mitochondrial matrix. This is Cytochrome c oxidase subunit 2 (COII) from Lasius sp.